Here is a 368-residue protein sequence, read N- to C-terminus: D-alanine--D-alanine ligase (368 aa).

The ATP-grasp domain maps to 145–348 (KRLLQGAGLH…YQDLITTLIE (204 aa)). Residue 175-230 (ADQLGLPLFIKPANQGSSVGVNKATTEAEFTAAIEEAFSYDHKVLIEAAIKGREIE) coordinates ATP. 3 residues coordinate Mg(2+): Asp-302, Glu-315, and Asn-317.

It belongs to the D-alanine--D-alanine ligase family. Mg(2+) serves as cofactor. Requires Mn(2+) as cofactor.

It localises to the cytoplasm. The enzyme catalyses 2 D-alanine + ATP = D-alanyl-D-alanine + ADP + phosphate + H(+). It functions in the pathway cell wall biogenesis; peptidoglycan biosynthesis. Its function is as follows. Cell wall formation. This Shouchella clausii (strain KSM-K16) (Alkalihalobacillus clausii) protein is D-alanine--D-alanine ligase.